Reading from the N-terminus, the 515-residue chain is Phenylalanine--tRNA ligase beta subunit (515 aa).

One can recognise a B5 domain in the interval 263 to 334 (HEYVKIYVDE…IVMGYNQMPR (72 aa)). Residues Asn312, Asp318, Glu321, and Asp322 each contribute to the Mg(2+) site.

It belongs to the phenylalanyl-tRNA synthetase beta subunit family. Type 2 subfamily. Tetramer of two alpha and two beta subunits. Requires Mg(2+) as cofactor.

The protein resides in the cytoplasm. The enzyme catalyses tRNA(Phe) + L-phenylalanine + ATP = L-phenylalanyl-tRNA(Phe) + AMP + diphosphate + H(+). This Pyrobaculum aerophilum (strain ATCC 51768 / DSM 7523 / JCM 9630 / CIP 104966 / NBRC 100827 / IM2) protein is Phenylalanine--tRNA ligase beta subunit.